Here is a 276-residue protein sequence, read N- to C-terminus: Pantothenate synthetase (276 aa).

An ATP-binding site is contributed by 26–33; the sequence is MGFLHEGH. Histidine 33 functions as the Proton donor in the catalytic mechanism. Residue glutamine 57 coordinates (R)-pantoate. Glutamine 57 is a beta-alanine binding site. 142–145 serves as a coordination point for ATP; that stretch reads GLKD. Glutamine 148 contributes to the (R)-pantoate binding site. Residues isoleucine 171 and 179–182 each bind ATP; that span reads KSSR.

This sequence belongs to the pantothenate synthetase family. In terms of assembly, homodimer.

The protein localises to the cytoplasm. The catalysed reaction is (R)-pantoate + beta-alanine + ATP = (R)-pantothenate + AMP + diphosphate + H(+). It participates in cofactor biosynthesis; (R)-pantothenate biosynthesis; (R)-pantothenate from (R)-pantoate and beta-alanine: step 1/1. Its function is as follows. Catalyzes the condensation of pantoate with beta-alanine in an ATP-dependent reaction via a pantoyl-adenylate intermediate. This Exiguobacterium sibiricum (strain DSM 17290 / CCUG 55495 / CIP 109462 / JCM 13490 / 255-15) protein is Pantothenate synthetase.